A 466-amino-acid polypeptide reads, in one-letter code: Mitochondrial-processing peptidase subunit beta (466 aa).

Position 73 (histidine 73) interacts with Zn(2+). The active-site Proton acceptor is the glutamate 76. 2 residues coordinate Zn(2+): histidine 77 and glutamate 153.

This sequence belongs to the peptidase M16 family. As to quaternary structure, heterodimer of mppA (alpha) and mppB (beta) subunits, forming the mitochondrial processing protease (MPP) in which mppA is involved in substrate recognition and binding and mppB is the catalytic subunit. The cofactor is Zn(2+).

Its subcellular location is the mitochondrion matrix. It catalyses the reaction Release of N-terminal transit peptides from precursor proteins imported into the mitochondrion, typically with Arg in position P2.. With respect to regulation, binding to mppA is required for catalytic activity. In terms of biological role, catalytic subunit of the essential mitochondrial processing protease (MPP), which cleaves the mitochondrial sequence off newly imported precursors proteins. Preferentially, cleaves after an arginine at position P2. This is Mitochondrial-processing peptidase subunit beta (mppB) from Lentinula edodes (Shiitake mushroom).